We begin with the raw amino-acid sequence, 399 residues long: Carbamoyl phosphate synthase small chain (399 aa).

The segment at 1 to 206 (MTQTIPSPKP…NKGYKTNNDA (206 aa)) is CPSase. L-glutamine-binding residues include serine 60, glycine 258, and glycine 260. In terms of domain architecture, Glutamine amidotransferase type-1 spans 210-398 (HIVAIDYGIK…FNLIMDYKKT (189 aa)). The active-site Nucleophile is cysteine 287. Residues leucine 288, glutamine 291, asparagine 329, glycine 331, and phenylalanine 332 each coordinate L-glutamine. Catalysis depends on residues histidine 371 and glutamate 373.

This sequence belongs to the CarA family. Composed of two chains; the small (or glutamine) chain promotes the hydrolysis of glutamine to ammonia, which is used by the large (or ammonia) chain to synthesize carbamoyl phosphate. Tetramer of heterodimers (alpha,beta)4.

It catalyses the reaction hydrogencarbonate + L-glutamine + 2 ATP + H2O = carbamoyl phosphate + L-glutamate + 2 ADP + phosphate + 2 H(+). The enzyme catalyses L-glutamine + H2O = L-glutamate + NH4(+). It participates in amino-acid biosynthesis; L-arginine biosynthesis; carbamoyl phosphate from bicarbonate: step 1/1. It functions in the pathway pyrimidine metabolism; UMP biosynthesis via de novo pathway; (S)-dihydroorotate from bicarbonate: step 1/3. Functionally, small subunit of the glutamine-dependent carbamoyl phosphate synthetase (CPSase). CPSase catalyzes the formation of carbamoyl phosphate from the ammonia moiety of glutamine, carbonate, and phosphate donated by ATP, constituting the first step of 2 biosynthetic pathways, one leading to arginine and/or urea and the other to pyrimidine nucleotides. The small subunit (glutamine amidotransferase) binds and cleaves glutamine to supply the large subunit with the substrate ammonia. The chain is Carbamoyl phosphate synthase small chain from Bartonella henselae (strain ATCC 49882 / DSM 28221 / CCUG 30454 / Houston 1) (Rochalimaea henselae).